We begin with the raw amino-acid sequence, 103 residues long: Large ribosomal subunit protein bL21 (103 aa).

This sequence belongs to the bacterial ribosomal protein bL21 family. Part of the 50S ribosomal subunit. Contacts protein L20.

This protein binds to 23S rRNA in the presence of protein L20. This chain is Large ribosomal subunit protein bL21, found in Nitrosomonas europaea (strain ATCC 19718 / CIP 103999 / KCTC 2705 / NBRC 14298).